A 299-amino-acid chain; its full sequence is ATP synthase gamma chain (299 aa).

This sequence belongs to the ATPase gamma chain family. As to quaternary structure, F-type ATPases have 2 components, CF(1) - the catalytic core - and CF(0) - the membrane proton channel. CF(1) has five subunits: alpha(3), beta(3), gamma(1), delta(1), epsilon(1). CF(0) has three main subunits: a, b and c.

The protein resides in the cell membrane. Its function is as follows. Produces ATP from ADP in the presence of a proton gradient across the membrane. The gamma chain is believed to be important in regulating ATPase activity and the flow of protons through the CF(0) complex. The chain is ATP synthase gamma chain from Clavibacter michiganensis subsp. michiganensis (strain NCPPB 382).